A 221-amino-acid polypeptide reads, in one-letter code: tRNA (guanine-N(7)-)-methyltransferase (221 aa).

S-adenosyl-L-methionine-binding residues include Glu-46, Asp-71, and Asp-120. Asp-120 is an active-site residue. Residue Asp-156 participates in substrate binding.

This sequence belongs to the class I-like SAM-binding methyltransferase superfamily. TrmB family.

It carries out the reaction guanosine(46) in tRNA + S-adenosyl-L-methionine = N(7)-methylguanosine(46) in tRNA + S-adenosyl-L-homocysteine. It participates in tRNA modification; N(7)-methylguanine-tRNA biosynthesis. Catalyzes the formation of N(7)-methylguanine at position 46 (m7G46) in tRNA. This Cytophaga hutchinsonii (strain ATCC 33406 / DSM 1761 / CIP 103989 / NBRC 15051 / NCIMB 9469 / D465) protein is tRNA (guanine-N(7)-)-methyltransferase.